Consider the following 675-residue polypeptide: Zinc finger protein 526 (675 aa).

3 C2H2-type zinc fingers span residues 56–78 (FMCS…QEQH), 108–130 (FQCG…QDAH), and 140–163 (YQCG…KTQH). The interval 160–195 (KTQHLSSAADEPPSPLPPPTPPPPPPPPPPPPPPEV) is disordered. Residues 171–194 (PPSPLPPPTPPPPPPPPPPPPPPE) show a composition bias toward pro residues. The C2H2-type 4 zinc-finger motif lies at 200-222 (YECPECSTLCATPEEFLEHQGTH). Residues 225-234 (SLEKEEHNGL) show a composition bias toward basic and acidic residues. The interval 225 to 283 (SLEKEEHNGLEEEEEDEEEGEEEEDDDDEETDEEEASSELTADDTGSNKSTADSAQSCG) is disordered. The segment covering 235-261 (EEEEEDEEEGEEEEDDDDEETDEEEAS) has biased composition (acidic residues). A compositionally biased stretch (polar residues) spans 269-281 (TGSNKSTADSAQS). 4 C2H2-type zinc fingers span residues 312–334 (FHCS…GRAH), 339–361 (HECT…QRLH), 367–389 (YLCV…RRAH), and 395–416 (HRCR…RRTH). The disordered stretch occupies residues 415-439 (THTGKSGTPTRVATVSPAPAEPTPP). Over residues 418–427 (GKSGTPTRVA) the composition is skewed to polar residues. 5 consecutive C2H2-type zinc fingers follow at residues 447–470 (LPCP…RAVH), 477–499 (HRCG…LRTH), 505–527 (FQCH…QLTH), 533–555 (YQCL…RRLH), and 578–600 (YYCG…QRVH). Residues 606–625 (LTLQPPRSPSPVPPPPPEPQ) are disordered. Pro residues predominate over residues 611–624 (PRSPSPVPPPPPEP).

The protein belongs to the krueppel C2H2-type zinc-finger protein family.

Its subcellular location is the nucleus. Its function is as follows. May be involved in transcriptional regulation. The chain is Zinc finger protein 526 (Znf526) from Mus musculus (Mouse).